The sequence spans 161 residues: Nucleotide-binding protein Sfri_0732 (161 aa).

Belongs to the YajQ family.

In terms of biological role, nucleotide-binding protein. The sequence is that of Nucleotide-binding protein Sfri_0732 from Shewanella frigidimarina (strain NCIMB 400).